The primary structure comprises 155 residues: Aspartate carbamoyltransferase regulatory chain (155 aa).

Residues Cys-113, Cys-118, Cys-139, and Cys-142 each coordinate Zn(2+).

The protein belongs to the PyrI family. Contains catalytic and regulatory chains. Zn(2+) is required as a cofactor.

In terms of biological role, involved in allosteric regulation of aspartate carbamoyltransferase. This Methanospirillum hungatei JF-1 (strain ATCC 27890 / DSM 864 / NBRC 100397 / JF-1) protein is Aspartate carbamoyltransferase regulatory chain.